Reading from the N-terminus, the 117-residue chain is Large ribosomal subunit protein bL20 (117 aa).

The protein belongs to the bacterial ribosomal protein bL20 family.

In terms of biological role, binds directly to 23S ribosomal RNA and is necessary for the in vitro assembly process of the 50S ribosomal subunit. It is not involved in the protein synthesizing functions of that subunit. The protein is Large ribosomal subunit protein bL20 of Idiomarina loihiensis (strain ATCC BAA-735 / DSM 15497 / L2-TR).